Reading from the N-terminus, the 157-residue chain is ATP synthase subunit b' (157 aa).

Residues 22-42 (ATLPIIAVQFLLLVAVLNSLF) traverse the membrane as a helical segment.

It belongs to the ATPase B chain family. In terms of assembly, F-type ATPases have 2 components, F(1) - the catalytic core - and F(0) - the membrane proton channel. F(1) has five subunits: alpha(3), beta(3), gamma(1), delta(1), epsilon(1). F(0) has four main subunits: a(1), b(1), b'(1) and c(10-14). The alpha and beta chains form an alternating ring which encloses part of the gamma chain. F(1) is attached to F(0) by a central stalk formed by the gamma and epsilon chains, while a peripheral stalk is formed by the delta, b and b' chains.

It is found in the cellular thylakoid membrane. F(1)F(0) ATP synthase produces ATP from ADP in the presence of a proton or sodium gradient. F-type ATPases consist of two structural domains, F(1) containing the extramembraneous catalytic core and F(0) containing the membrane proton channel, linked together by a central stalk and a peripheral stalk. During catalysis, ATP synthesis in the catalytic domain of F(1) is coupled via a rotary mechanism of the central stalk subunits to proton translocation. Functionally, component of the F(0) channel, it forms part of the peripheral stalk, linking F(1) to F(0). The b'-subunit is a diverged and duplicated form of b found in plants and photosynthetic bacteria. In Synechococcus sp. (strain JA-3-3Ab) (Cyanobacteria bacterium Yellowstone A-Prime), this protein is ATP synthase subunit b'.